The chain runs to 212 residues: Imidazole glycerol phosphate synthase subunit HisH (212 aa).

The Glutamine amidotransferase type-1 domain occupies 3 to 211; the sequence is LIAVIDYDMG…VQQVQKLALV (209 aa). The active-site Nucleophile is Cys-81. Active-site residues include His-186 and Glu-188.

As to quaternary structure, heterodimer of HisH and HisF.

It is found in the cytoplasm. It catalyses the reaction 5-[(5-phospho-1-deoxy-D-ribulos-1-ylimino)methylamino]-1-(5-phospho-beta-D-ribosyl)imidazole-4-carboxamide + L-glutamine = D-erythro-1-(imidazol-4-yl)glycerol 3-phosphate + 5-amino-1-(5-phospho-beta-D-ribosyl)imidazole-4-carboxamide + L-glutamate + H(+). The enzyme catalyses L-glutamine + H2O = L-glutamate + NH4(+). It functions in the pathway amino-acid biosynthesis; L-histidine biosynthesis; L-histidine from 5-phospho-alpha-D-ribose 1-diphosphate: step 5/9. Functionally, IGPS catalyzes the conversion of PRFAR and glutamine to IGP, AICAR and glutamate. The HisH subunit catalyzes the hydrolysis of glutamine to glutamate and ammonia as part of the synthesis of IGP and AICAR. The resulting ammonia molecule is channeled to the active site of HisF. The protein is Imidazole glycerol phosphate synthase subunit HisH of Microcystis aeruginosa (strain NIES-843 / IAM M-2473).